The chain runs to 244 residues: METQSEEQAVTKPADSGGEGGPPQVAGAQAARPEDRMTLLLRLRAQTKQQLLEYKSMVDANEEKTPEQIMQEKQIEAKIEELENEVEEAKTAFEMKKLALDRMQLSTALKKHLEKVDIKTSVLMDNMKQILNLNKLIMKSQQETWDLEEKLLDVRKKRLQLKQASERKLLEIQTEKNKQKDDLDSMENSDKIKAIQQNLETEIQITTVIQHVFQNLILGSKVNWAEDPALKETVLQLEKNLTMI.

The residue at position 1 (M1) is an N-acetylmethionine. The tract at residues 1-33 (METQSEEQAVTKPADSGGEGGPPQVAGAQAARP) is disordered. Residue S16 is modified to Phosphoserine. Over residues 22 to 31 (PPQVAGAQAA) the composition is skewed to low complexity. K64 is covalently cross-linked (Glycyl lysine isopeptide (Lys-Gly) (interchain with G-Cter in SUMO2)). Phosphothreonine is present on T65. 2 coiled-coil regions span residues 66–104 (PEQI…DRMQ) and 146–189 (DLEE…MENS).

Belongs to the CENP-H/MCM16 family. As to quaternary structure, self-associates. Component of the CENPA-NAC complex, at least composed of CENPA, CENPC, CENPH, CENPM, CENPN, CENPT and CENPU. The CENPA-NAC complex interacts with the CENPA-CAD complex, composed of CENPI, CENPK, CENPL, CENPO, CENPP, CENPQ, CENPR and CENPS. Interacts with KIF2C and NDC80.

It localises to the nucleus. It is found in the chromosome. Its subcellular location is the centromere. The protein resides in the kinetochore. In terms of biological role, component of the CENPA-NAC (nucleosome-associated) complex, a complex that plays a central role in assembly of kinetochore proteins, mitotic progression and chromosome segregation. The CENPA-NAC complex recruits the CENPA-CAD (nucleosome distal) complex and may be involved in incorporation of newly synthesized CENPA into centromeres. This Bos taurus (Bovine) protein is Centromere protein H (CENPH).